A 397-amino-acid polypeptide reads, in one-letter code: LIM/homeobox protein Lhx9 (397 aa).

LIM zinc-binding domains lie at 69–130 and 131–193; these read ALCA…RFSV and QRCA…LLQG. Disordered regions lie at residues 248-272, 330-365, and 378-397; these read ENEADHLDRDQQPYPPSQKTKRMRT, ENGGVDKADGTSLPAPPSADSGALTPPGTATTLTDL, and SNMDSHEPGSPSQTTLTNLF. The segment at residues 267–326 is a DNA-binding region (homeobox); sequence TKRMRTSFKHHQLRTMKSYFAINHNPDAKDLKQLAQKTGLTKRVLQVWFQNARAKFRRNL. Residues 353–365 show a composition bias toward low complexity; it reads LTPPGTATTLTDL. The segment covering 387 to 397 has biased composition (polar residues); the sequence is SPSQTTLTNLF.

As to quaternary structure, interacts with LDB1 and LDB2. In terms of tissue distribution, expressed in the dorsal thalamus and inner nuclei of the cerebellum.

The protein resides in the nucleus. Involved in gonadal development. This chain is LIM/homeobox protein Lhx9 (Lhx9), found in Mus musculus (Mouse).